Consider the following 953-residue polypeptide: E3 ubiquitin-protein ligase ZNF598 (953 aa).

The segment covering 25–39 (KPSKSTRIKPTKPHH) has biased composition (basic residues). A disordered region spans residues 25–47 (KPSKSTRIKPTKPHHTPSNSMES). Residues 57–97 (CVLCCQDIDLFAVGKCDHPVCYRCSTKMRVLCEQKYCAVCR) form an RING-type zinc finger. The segment at 215-238 (PLCKFCDDRYLDNDELLKHLRRDH) adopts a C2H2-type zinc-finger fold. Disordered regions lie at residues 299–779 (SKNR…EDSS) and 884–911 (EKQQ…SSLD). The segment covering 371–380 (AAAMRASMAS) has biased composition (low complexity). Over residues 381–409 (HQEERSHAQERSMLKPRREEKLEPDETRN) the composition is skewed to basic and acidic residues. Polar residues-rich tracts occupy residues 410–431 (NRST…NGSL) and 467–483 (LSGS…YTNQ). A Phosphoserine modification is found at S489. 2 stretches are compositionally biased toward low complexity: residues 508–518 (QSSAASAWSQA) and 536–553 (MTPM…PLPS). Composition is skewed to polar residues over residues 555–564 (SVPQPLTASS) and 641–650 (LGSPSHTPET). A compositionally biased stretch (basic and acidic residues) spans 655–666 (AHKENVPEKKPP). The span at 695–711 (SCTSFPENITSSKQPVT) shows a compositional bias: polar residues. Over residues 747-765 (LPPPPPPGLGPAVSKPPPG) the composition is skewed to pro residues. Over residues 770-779 (PLNSNVEDSS) the composition is skewed to polar residues.

Belongs to the ZNF598/HEL2 family.

It localises to the cytoplasm. It is found in the cytosol. The enzyme catalyses S-ubiquitinyl-[E2 ubiquitin-conjugating enzyme]-L-cysteine + [acceptor protein]-L-lysine = [E2 ubiquitin-conjugating enzyme]-L-cysteine + N(6)-ubiquitinyl-[acceptor protein]-L-lysine.. Its pathway is protein modification; protein ubiquitination. E3 ubiquitin-protein ligase that plays a key role in the ribosome quality control (RQC), a pathway that takes place when a ribosome has stalled during translation, leading to degradation of nascent peptide chains. ZNF598 is activated when ribosomes are stalled within an mRNA following translation of prematurely polyadenylated mRNAs. Acts as a ribosome collision sensor: specifically recognizes and binds collided di-ribosome, which arises when a trailing ribosome encounters a slower leading ribosome, leading to terminally arrest translation. Following binding to colliding ribosomes, mediates monoubiquitination of 40S ribosomal proteins RPS10/eS10 and RPS3/uS3, and 'Lys-63'-linked polyubiquitination of RPS20/uS10. Polyubiquitination of RPS20/uS10 promotes recruitment of the RQT (ribosome quality control trigger) complex, which drives the disassembly of stalled ribosomes, followed by degradation of nascent peptides. This chain is E3 ubiquitin-protein ligase ZNF598, found in Danio rerio (Zebrafish).